The sequence spans 513 residues: MQLNSTEISDLIKQRIEQFEVVSEARNEGTIVSVTDGIIRIHGLADCMQGEMIELPGNRYAIALNLERDSIGAVVMGPYADLTEGVKVYTTGRILEVPVGPGLLGRVVNTLGAPIDGKGALDNDGFEPVEKIAPGVIERKSVDEPVQTGYKSIDAMIPVGRGQRELIIGDRQTGKTALAIDAIINQKGTGVKCVYVAIGQKASTIANVVRKLEEHGALANTIVVVASASESAALQYLAPFAGCTMGEYFRDRGENALIVYDDLSKQAVAYRQISLLLKRPPGREAYPGDVFYLHSRLLERASRVNAEYVEKFTNGEVKGTTGSLTALPIIETQGGDVSAFVPTNVISITDGQIFLETDLFNSGIRPAVNAGISVSRVGGAAQTKIVKKLGGGIRLALAQYRELAAFSQFASDLDDATRAQLEHGERVTELMKQKQYAPMSVAEMSLSLFAAEKGFLQDIEIAKIMDFEAALLSYANSTYAELVAQINETGNYNAEIEAQLKELLTKFKSTQTW.

An ATP-binding site is contributed by G169 to T176.

It belongs to the ATPase alpha/beta chains family. As to quaternary structure, F-type ATPases have 2 components, CF(1) - the catalytic core - and CF(0) - the membrane proton channel. CF(1) has five subunits: alpha(3), beta(3), gamma(1), delta(1), epsilon(1). CF(0) has three main subunits: a(1), b(2) and c(9-12). The alpha and beta chains form an alternating ring which encloses part of the gamma chain. CF(1) is attached to CF(0) by a central stalk formed by the gamma and epsilon chains, while a peripheral stalk is formed by the delta and b chains.

The protein localises to the cell inner membrane. It carries out the reaction ATP + H2O + 4 H(+)(in) = ADP + phosphate + 5 H(+)(out). Produces ATP from ADP in the presence of a proton gradient across the membrane. The alpha chain is a regulatory subunit. The polypeptide is ATP synthase subunit alpha (Pseudoalteromonas translucida (strain TAC 125)).